We begin with the raw amino-acid sequence, 165 residues long: Small ribosomal subunit protein uS5 (165 aa).

In terms of domain architecture, S5 DRBM spans 10 to 73 (LKEKVVFINR…EDAKKNLVEV (64 aa)).

This sequence belongs to the universal ribosomal protein uS5 family. In terms of assembly, part of the 30S ribosomal subunit. Contacts proteins S4 and S8.

Its function is as follows. With S4 and S12 plays an important role in translational accuracy. In terms of biological role, located at the back of the 30S subunit body where it stabilizes the conformation of the head with respect to the body. The protein is Small ribosomal subunit protein uS5 of Clostridium acetobutylicum (strain ATCC 824 / DSM 792 / JCM 1419 / IAM 19013 / LMG 5710 / NBRC 13948 / NRRL B-527 / VKM B-1787 / 2291 / W).